The following is a 198-amino-acid chain: Myc target protein 1 homolog (198 aa).

Positions 52 to 72 (RRRASASISPRMPKSSSRRPR) match the Bipartite nuclear localization signal motif. 2 disordered regions span residues 58-83 (SISP…LNRS) and 172-198 (NNSL…FPDS). The span at 172 to 181 (NNSLRLGPST) shows a compositional bias: polar residues.

The protein belongs to the MYCT1 family.

Its subcellular location is the nucleus. In terms of biological role, may regulate certain MYC target genes, MYC seems to be a direct upstream transcriptional activator. In Xenopus tropicalis (Western clawed frog), this protein is Myc target protein 1 homolog (myct1).